The chain runs to 730 residues: UvrABC system protein C (730 aa).

The GIY-YIG domain maps to 16–95 (AAPGVYKFRD…IKEFDPRFNV (80 aa)). The UVR domain maps to 208 to 243 (DKLVKDLEKRMQQASEDLDFETAARLRDDIGALRKA). Residues 678–730 (ARALPAAVGDDELDKESESSVTSADAPSAESGSGDEGSESRELSMPTTGPSAQ) are disordered.

Belongs to the UvrC family. As to quaternary structure, interacts with UvrB in an incision complex.

The protein resides in the cytoplasm. The UvrABC repair system catalyzes the recognition and processing of DNA lesions. UvrC both incises the 5' and 3' sides of the lesion. The N-terminal half is responsible for the 3' incision and the C-terminal half is responsible for the 5' incision. This chain is UvrABC system protein C, found in Rhodococcus erythropolis (strain PR4 / NBRC 100887).